Here is a 181-residue protein sequence, read N- to C-terminus: Adenine phosphoribosyltransferase (181 aa).

Belongs to the purine/pyrimidine phosphoribosyltransferase family. In terms of assembly, homodimer.

It is found in the cytoplasm. It carries out the reaction AMP + diphosphate = 5-phospho-alpha-D-ribose 1-diphosphate + adenine. It participates in purine metabolism; AMP biosynthesis via salvage pathway; AMP from adenine: step 1/1. Its function is as follows. Catalyzes a salvage reaction resulting in the formation of AMP, that is energically less costly than de novo synthesis. In Chromohalobacter salexigens (strain ATCC BAA-138 / DSM 3043 / CIP 106854 / NCIMB 13768 / 1H11), this protein is Adenine phosphoribosyltransferase.